The chain runs to 739 residues: Phosphoribosylformylglycinamidine synthase subunit PurL (739 aa).

Residue H49 is part of the active site. Residues Y52 and K91 each contribute to the ATP site. Residue E93 participates in Mg(2+) binding. Residues 94–97 (SHNH) and R116 each bind substrate. Residue H95 is the Proton acceptor of the active site. D117 contributes to the Mg(2+) binding site. Substrate is bound at residue Q240. D268 serves as a coordination point for Mg(2+). 312–314 (ESQ) contributes to the substrate binding site. 2 residues coordinate ATP: D493 and G530. Position 531 (N531) interacts with Mg(2+). Residue S533 participates in substrate binding.

It belongs to the FGAMS family. As to quaternary structure, monomer. Part of the FGAM synthase complex composed of 1 PurL, 1 PurQ and 2 PurS subunits.

It localises to the cytoplasm. The catalysed reaction is N(2)-formyl-N(1)-(5-phospho-beta-D-ribosyl)glycinamide + L-glutamine + ATP + H2O = 2-formamido-N(1)-(5-O-phospho-beta-D-ribosyl)acetamidine + L-glutamate + ADP + phosphate + H(+). It participates in purine metabolism; IMP biosynthesis via de novo pathway; 5-amino-1-(5-phospho-D-ribosyl)imidazole from N(2)-formyl-N(1)-(5-phospho-D-ribosyl)glycinamide: step 1/2. Its function is as follows. Part of the phosphoribosylformylglycinamidine synthase complex involved in the purines biosynthetic pathway. Catalyzes the ATP-dependent conversion of formylglycinamide ribonucleotide (FGAR) and glutamine to yield formylglycinamidine ribonucleotide (FGAM) and glutamate. The FGAM synthase complex is composed of three subunits. PurQ produces an ammonia molecule by converting glutamine to glutamate. PurL transfers the ammonia molecule to FGAR to form FGAM in an ATP-dependent manner. PurS interacts with PurQ and PurL and is thought to assist in the transfer of the ammonia molecule from PurQ to PurL. This is Phosphoribosylformylglycinamidine synthase subunit PurL from Parvibaculum lavamentivorans (strain DS-1 / DSM 13023 / NCIMB 13966).